The chain runs to 240 residues: EF-hand domain-containing protein D2 (240 aa).

The tract at residues 1 to 51 is disordered; that stretch reads MATDELASKLSRRLQMEGEGGEATEQPGLNGAAAAAAAEAPDETAQALGSA. At Ala2 the chain carries N-acetylalanine. At Ser11 the chain carries Phosphoserine. Residues 32 to 47 show a composition bias toward low complexity; that stretch reads AAAAAAAEAPDETAQA. Phosphoserine occurs at positions 74 and 76. Tyr83 bears the Phosphotyrosine mark. EF-hand domains follow at residues 92–127 and 128–163; these read KQIK…LGAP and QTHL…AAAG. 8 residues coordinate Ca(2+): Asp105, Asp109, Glu116, Asp141, Asp143, Asp145, Lys147, and Glu152. Lys233 is subject to N6-acetyllysine.

As to quaternary structure, interacts with CASP9; with inactive form. Detected in thymus, kidney, spleen, lung, liver and brain. Highest abundance in brain and lowest in kidney and thymus.

The protein resides in the membrane raft. May regulate B-cell receptor (BCR)-induced immature and primary B-cell apoptosis. Plays a role as negative regulator of the canonical NF-kappa-B-activating branch. Controls spontaneous apoptosis through the regulation of BCL2L1 abundance. This chain is EF-hand domain-containing protein D2 (Efhd2), found in Mus musculus (Mouse).